The chain runs to 380 residues: Flap endonuclease 1-A (380 aa).

Residues 1 to 105 are N-domain; sequence MGIKGLTKLL…EELAKRFSKR (105 aa). Aspartate 34 lines the Mg(2+) pocket. Arginine 71 is a binding site for DNA. Aspartate 87, glutamate 159, glutamate 161, aspartate 180, and aspartate 182 together coordinate Mg(2+). The interval 123–254 is I-domain; the sequence is AVEKLSKRTV…QTALKLIRQH (132 aa). DNA is bound at residue glutamate 159. DNA-binding residues include glycine 232 and aspartate 234. Residue aspartate 234 participates in Mg(2+) binding. An interaction with PCNA region spans residues 336-344; sequence SQGRLESFF. Residues 351-380 form a disordered region; that stretch reads SAPLKRKETSDKTSKAAAANKKTKAGGKKK. Basic and acidic residues predominate over residues 355-364; sequence KRKETSDKTS. Positions 371 to 380 are enriched in basic residues; it reads KKTKAGGKKK.

The protein belongs to the XPG/RAD2 endonuclease family. FEN1 subfamily. As to quaternary structure, interacts with PCNA. Three molecules of FEN1 bind to one PCNA trimer with each molecule binding to one PCNA monomer. PCNA stimulates the nuclease activity without altering cleavage specificity. It depends on Mg(2+) as a cofactor. Phosphorylated. Phosphorylation upon DNA damage induces relocalization to the nuclear plasma.

The protein resides in the nucleus. Its subcellular location is the nucleolus. It localises to the nucleoplasm. It is found in the mitochondrion. Structure-specific nuclease with 5'-flap endonuclease and 5'-3' exonuclease activities involved in DNA replication and repair. During DNA replication, cleaves the 5'-overhanging flap structure that is generated by displacement synthesis when DNA polymerase encounters the 5'-end of a downstream Okazaki fragment. It enters the flap from the 5'-end and then tracks to cleave the flap base, leaving a nick for ligation. Also involved in the long patch base excision repair (LP-BER) pathway, by cleaving within the apurinic/apyrimidinic (AP) site-terminated flap. Acts as a genome stabilization factor that prevents flaps from equilibrating into structures that lead to duplications and deletions. Also possesses 5'-3' exonuclease activity on nicked or gapped double-stranded DNA, and exhibits RNase H activity. Also involved in replication and repair of rDNA and in repairing mitochondrial DNA. This chain is Flap endonuclease 1-A, found in Sorghum bicolor (Sorghum).